Reading from the N-terminus, the 179-residue chain is Large ribosomal subunit protein uL6 (179 aa).

Belongs to the universal ribosomal protein uL6 family. As to quaternary structure, part of the 50S ribosomal subunit.

Functionally, this protein binds to the 23S rRNA, and is important in its secondary structure. It is located near the subunit interface in the base of the L7/L12 stalk, and near the tRNA binding site of the peptidyltransferase center. The sequence is that of Large ribosomal subunit protein uL6 from Saccharopolyspora erythraea (strain ATCC 11635 / DSM 40517 / JCM 4748 / NBRC 13426 / NCIMB 8594 / NRRL 2338).